The following is a 493-amino-acid chain: MSELTSLTIAEARQKLRAKEITAIELTEAYISAIDAANGRLNAYIKVTPDLARVMAKNSDERIAAGKAGELEGIPLGIKDLFATVGVHTQACSHILDGFEPRYESTVTQNLWDDGAVMLGKLNMDEFAMGSSNETSYYGPVINPWRAAGSNQQLVPGGSSGGSAAAVAAHLCAGATATDTGGSIRQPAAFTGTVGIKPTYGRCSRWGTVAFASSLDQAGPIARDVRDAAILLKSMASVDAKDTTSVDLPVPDYEAALGQSLKGMKIGIPNEYRVDGMPDEIETLWRQGIAWLKEAGAEIVDISLPHTKYALPAYYIVAPAEASSNLARYDGVRYGLRVDGKDIVDMYEKTRAAGFGKEVKRRIMIGTYVLSAGYYDAYYIRAQKVRTLIKRDFELAFDAGVDAILTPATPSSAFGVADENLAADPVKMYLNDIFTVTVNMAGLPGIAVPAGLDHKGLPLGLQLIGKPFDEETLFKTAHVIEQAAGRFTPAKWW.

Catalysis depends on charge relay system residues Lys79 and Ser159. Ser183 serves as the catalytic Acyl-ester intermediate.

It belongs to the amidase family. GatA subfamily. As to quaternary structure, heterotrimer of A, B and C subunits.

The catalysed reaction is L-glutamyl-tRNA(Gln) + L-glutamine + ATP + H2O = L-glutaminyl-tRNA(Gln) + L-glutamate + ADP + phosphate + H(+). Its function is as follows. Allows the formation of correctly charged Gln-tRNA(Gln) through the transamidation of misacylated Glu-tRNA(Gln) in organisms which lack glutaminyl-tRNA synthetase. The reaction takes place in the presence of glutamine and ATP through an activated gamma-phospho-Glu-tRNA(Gln). The polypeptide is Glutamyl-tRNA(Gln) amidotransferase subunit A (Rhizobium johnstonii (strain DSM 114642 / LMG 32736 / 3841) (Rhizobium leguminosarum bv. viciae)).